A 316-amino-acid chain; its full sequence is MNFKKGEVILAPMASYTHSAFRRLCRRLGADRTYTELISAVGVLRNGIPMKLAYFTEEERPIHIQVFGSNPEEIAQASVVIAKELKPDFIDINFGCSVPKVLRNKAAGYMLQCPPLMGEVVKETVEALKPYGIPVSAKIRLGFEKDEVERIVEELQKAGVSLIAIHARTAKQGFSGKALWHRIKEAKKVASVPIIGSGDVKSWRDIERMFEETECDGVMVGRAALSNPWIFKEFKEKRDIEVGLKERMDFILEELSMMTEYMSREKACAEIKSQIVQILKGVPNSRELKTYIVHAENCKELVKRIEEAKERELLYA.

Residues 12–14 (PMA) and Gln65 contribute to the FMN site. The Proton donor role is filled by Cys96. FMN contacts are provided by residues Lys138, 197-199 (SGD), and 221-222 (GR).

The protein belongs to the Dus family. The cofactor is FMN.

The catalysed reaction is a 5,6-dihydrouridine in tRNA + NAD(+) = a uridine in tRNA + NADH + H(+). The enzyme catalyses a 5,6-dihydrouridine in tRNA + NADP(+) = a uridine in tRNA + NADPH + H(+). Catalyzes the synthesis of 5,6-dihydrouridine (D), a modified base found in the D-loop of most tRNAs, via the reduction of the C5-C6 double bond in target uridines. The protein is Probable tRNA-dihydrouridine synthase (dus) of Aquifex aeolicus (strain VF5).